Reading from the N-terminus, the 3907-residue chain is Cyclo-acetoacetyl-L-tryptophan synthase (3907 aa).

Residues 2 to 436 (KTPIAVVGTA…GTNAHAIIES (435 aa)) enclose the Ketosynthase family 3 (KS3) domain. Active-site for beta-ketoacyl synthase activity residues include Cys-176, His-313, and His-356. Residues 555–870 (IFTGQGAQWA…SLLRRGQNDL (316 aa)) are malonyl-CoA:ACP transacylase (MAT) domain. Residues 937 to 1074 (HPLLGRRSAD…ARLTLHLGDA (138 aa)) form an N-terminal hotdog fold region. Residues 937 to 1236 (HPLLGRRSAD…GLVMKSVPQP (300 aa)) form a dehydratase (DH) domain region. The PKS/mFAS DH domain maps to 937–1239 (HPLLGRRSAD…MKSVPQPDTS (303 aa)). The segment at 1092–1239 (LAPVDVADLY…MKSVPQPDTS (148 aa)) is C-terminal hotdog fold. Residues 1386 to 1573 (AAMFSQLSKD…FSGIDHIFHD (188 aa)) are methyltransferase (MT) domain. Positions 2064–2238 (GTYFMIDMAT…VGSVMALGMV (175 aa)) are ketoreductase (KR)domain. A disordered region spans residues 2324–2352 (TKEGQYAEQEDSPSLLVPDEQLQESGPGR). Residues 2356–2430 (DDLLARLSGK…LCEKAVPKPN (75 aa)) enclose the Carrier 1 domain. O-(pantetheine 4'-phosphoryl)serine is present on Ser-2390. The segment at 2504 to 2926 (MSPHQSQIWF…SSNPLISVQS (423 aa)) is condensation. Residues 2959–3359 (FQDMVDQYGD…GSLILLGRMD (401 aa)) are adenylation. The region spanning 3474 to 3549 (KRLTLGEGEL…QMALKVDARK (76 aa)) is the Carrier 2 domain. Ser-3509 is modified (O-(pantetheine 4'-phosphoryl)serine). The segment at 3594–3813 (LTGSTSFLGR…DFQKVEIIAE (220 aa)) is reductase (RED) domain.

It in the C-terminal section; belongs to the NRP synthetase family.

The enzyme catalyses L-tryptophan + malonyl-CoA + acetyl-CoA = cyclo-acetoacetyl-L-tryptophan + CO2 + 2 CoA + H2O. It participates in secondary metabolite biosynthesis. In terms of biological role, hybrid PKS-NRPS synthetase; part of the gene cluster that mediates the biosynthesis of the fungal neurotoxin cyclopiazonic acid (CPA), a nanomolar inhibitor of Ca(2+)-ATPase with a unique pentacyclic indole tetramic acid scaffold. The hybrid two module polyketide synthase-nonribosomal peptide synthetase (PKS-NRPS) cpaS incorporates acetyl-CoA, malonyl-CoA, and tryptophan (Trp) and utilizes a C-terminal redox-incompetent reductase domain to make and release the tryptophan tetramic acid, cyclo-acetoacetyl-L-tryptophan (c-AATrp), as the first intermediate in the pathway. CpaS catalyzes a Dieckmann-type cyclization on the N-acetoacetyl-Trp intermediate bound in thioester linkage to the phosphopantetheinyl arm of the T domain to form and release c-AATrp. CpaD then regiospecifically dimethylallylates c-AATrp to form beta-cyclopiazonic acid. CpaD discriminates against free Trp but accepts tryptophan-containing thiohydantoins, diketopiperazines, and linear peptides as substrates for C4-prenylation and also acts as regiospecific O-dimethylallyltransferase (DMAT) on a tyrosine-derived tetramic acid. The beta-cyclopiazonate dehydrogenase cpaO then carries out the dehydrogenation of beta-CPA to yield an unstable enimine product, which is captured by intramolecular cyclization to create the pentacyclic fused scaffold of alpha-cyclopiazonate. Finally, the cytochrome P450 monooxygenase cpaH mediates the conversion of CPA into the less toxic 2-oxocyclopiazonic acid, the end product of the CPA pathway in A.oryza. The protein is Cyclo-acetoacetyl-L-tryptophan synthase of Aspergillus oryzae (Yellow koji mold).